We begin with the raw amino-acid sequence, 504 residues long: MELLTGAGLWSVAIFTVIFILLVDLMHRHQRWTSRYPPGPVPWPVLGNLLQVDLDNMPYSLYKLQNRYGDVFSLQMGWKPMVVINGLKAMKEVLLTCGEDTADRPQVPIFEYLGVKPGSQGVVLAPYGPEWREQRRFSVSTLRNFGLGKKSLEDWVTKEARHLCDAFTAQAGQPINPNTMLNNAVCNVIASLIFARRFEYEDPYLIRMQKVLEDSLTEISGLIPEVLNMFPILLRIPGLPGKVFQGQKSLLAIVENLLTENRNTWDPDQPPRNLTDAFLAEIEKVKGNAESSFNDENLRMVVLDLFTAGMVTTSTTLSWALLLMILHPDVQRRVQQEIDAVIGQVRHPEMADQARMPYTNAVIHEVQRFGDIAPLNLPRITSRDIEVQDFLIPKGSILIPNMSSVLKDETVWEKPLRFHPEHFLDAQGHFVKPEAFMPFSAGRRSCLGEPLARMELFLFFTCLLQHFSFSVPNGQPRPRNLGVFPFPVAPYPYQLCAVMREQGH.

Ser-249 bears the Phosphoserine mark. Cys-446 serves as a coordination point for heme.

This sequence belongs to the cytochrome P450 family. It depends on heme as a cofactor.

It localises to the endoplasmic reticulum membrane. The protein resides in the microsome membrane. It catalyses the reaction an organic molecule + reduced [NADPH--hemoprotein reductase] + O2 = an alcohol + oxidized [NADPH--hemoprotein reductase] + H2O + H(+). Its function is as follows. Cytochromes P450 are a group of heme-thiolate monooxygenases. In liver microsomes, this enzyme is involved in an NADPH-dependent electron transport pathway. It oxidizes a variety of structurally unrelated compounds, including steroids, fatty acids, and xenobiotics. This is Cytochrome P450 2D10 (Cyp2d10) from Mus musculus (Mouse).